Reading from the N-terminus, the 372-residue chain is NAD(P)H-quinone oxidoreductase subunit 1 (372 aa).

The next 8 membrane-spanning stretches (helical) occupy residues 27-47 (VLWM…GVLV), 97-117 (FLFT…YLIV), 128-148 (VGAG…GLLM), 176-196 (LALA…IDIV), 204-224 (ILGW…IAAL), 254-274 (FALF…LVSI), 308-328 (ALGI…AILL), and 347-367 (FLLP…LTFP).

It belongs to the complex I subunit 1 family. In terms of assembly, NDH-1 is composed of at least 11 different subunits.

It is found in the cellular thylakoid membrane. The enzyme catalyses a plastoquinone + NADH + (n+1) H(+)(in) = a plastoquinol + NAD(+) + n H(+)(out). It carries out the reaction a plastoquinone + NADPH + (n+1) H(+)(in) = a plastoquinol + NADP(+) + n H(+)(out). Functionally, NDH-1 shuttles electrons from an unknown electron donor, via FMN and iron-sulfur (Fe-S) centers, to quinones in the respiratory and/or the photosynthetic chain. The immediate electron acceptor for the enzyme in this species is believed to be plastoquinone. Couples the redox reaction to proton translocation, and thus conserves the redox energy in a proton gradient. This Synechococcus elongatus (strain ATCC 33912 / PCC 7942 / FACHB-805) (Anacystis nidulans R2) protein is NAD(P)H-quinone oxidoreductase subunit 1.